Consider the following 485-residue polypeptide: REST corepressor 1 (485 aa).

Disordered stretches follow at residues 1–26 and 49–110; these read MPAMVEKGPEVSGKRRGRNNAAASAS and AAAS…VGPQ. Low complexity-rich tracts occupy residues 49–64 and 74–95; these read AAASSASAAAASAAAA and AAAAPNGNSSSNSWEEGSSGSS. Residues 78–257 form an interaction with HDAC1 region; it reads PNGNSSSNSW…RHARKQKRER (180 aa). The 87-residue stretch at 103 to 189 folds into the ELM2 domain; sequence GGMRVGPQYQ…KSLADLPNFT (87 aa). A Glycyl lysine isopeptide (Lys-Gly) (interchain with G-Cter in SUMO2) cross-link involves residue Lys122. At Ser127 the chain carries Phosphoserine. The region spanning 190–241 is the SANT 1 domain; the sequence is PFPDEWTVEDKVLFEQAFSFHGKTFHRIQQMLPDKSIASLVKFYYSWKKTRT. Residues 244–273 adopt a coiled-coil conformation; sequence SVMDRHARKQKREREESEDELEEANGNNPI. The tract at residues 244–314 is disordered; the sequence is SVMDRHARKQ…AKNRAKRKPP (71 aa). The residue at position 260 (Ser260) is a Phosphoserine. Residues 278–288 show a composition bias toward basic and acidic residues; sequence DQNKESKKEVP. Residues 296 to 384 are interaction with KDM1A; the sequence is VKKEKHSTQA…LPEVIQKCNA (89 aa). Lys297 participates in a covalent cross-link: Glycyl lysine isopeptide (Lys-Gly) (interchain with G-Cter in SUMO2). Residues 334-369 are a coiled coil; sequence ATTVLRQLDMELVSVKRQIQNIKQTNSALKEKLDGG. In terms of domain architecture, SANT 2 spans 381 to 432; the sequence is KCNARWTTEEQLLAVQAIRKYGRDFQAISDVIGNKSVVQVKNFFVNYRRRFN. The tract at residues 442 to 485 is disordered; it reads AEHGKEETNGPSNQKPVKSPDNSIKMPEEEDEAPVLDVRYASAS. Residues 450-463 are compositionally biased toward polar residues; sequence NGPSNQKPVKSPDN. The residue at position 460 (Ser460) is a Phosphoserine. A Glycyl lysine isopeptide (Lys-Gly) (interchain with G-Cter in SUMO2) cross-link involves residue Lys466.

It belongs to the CoREST family. As to quaternary structure, interacts directly with GFI1 and GFI1B in a RCOR/GFI/KDM1A/HDAC complex. Interacts with INMS1. Component of a BHC histone deacetylase complex that contains HDAC1, HDAC2, HMG20B/BRAF35, KDM1A, RCOR1/CoREST and PHF21A/BHC80. The BHC complex may also contain ZMYM2, ZNF217, ZMYM3, GSE1 and GTF2I. Interacts with REST. Interacts with the SMARCE1/BAF57, suggesting that the BHC complex may recruit the ATP-dependent chromatin-remodeling SWI-SNF complex. Interacts with SOX2. In terms of assembly, (Microbial infection) Interacts with herpes virus HSV-1 ICP0 protein; the interaction leads to the disruption of the BHC complex, thereby preventing the BHC complex from repressing transcription of viral genes. In terms of processing, phosphorylated by HSV-1 protein kinases in case of infection. In terms of tissue distribution, ubiquitously expressed.

The protein resides in the nucleus. Essential component of the BHC complex, a corepressor complex that represses transcription of neuron-specific genes in non-neuronal cells. The BHC complex is recruited at RE1/NRSE sites by REST and acts by deacetylating and demethylating specific sites on histones, thereby acting as a chromatin modifier. In the BHC complex, it serves as a molecular beacon for the recruitment of molecular machinery, including MeCP2 and SUV39H1, that imposes silencing across a chromosomal interval. Plays a central role in demethylation of Lys-4 of histone H3 by promoting demethylase activity of KDM1A on core histones and nucleosomal substrates. It also protects KDM1A from the proteasome. Component of a RCOR/GFI/KDM1A/HDAC complex that suppresses, via histone deacetylase (HDAC) recruitment, a number of genes implicated in multilineage blood cell development and controls hematopoietic differentiation. The sequence is that of REST corepressor 1 (RCOR1) from Homo sapiens (Human).